The following is a 183-amino-acid chain: NADH-quinone oxidoreductase subunit A (183 aa).

Transmembrane regions (helical) follow at residues 11-31 (IIAF…VPLL), 63-83 (FYLV…LYAW), and 98-118 (MVIF…TGAL). The disordered stretch occupies residues 160–183 (GHIPAQSSGRMKSKTSTAPSSKQE). Polar residues predominate over residues 164–183 (AQSSGRMKSKTSTAPSSKQE).

Belongs to the complex I subunit 3 family. NDH-1 is composed of 14 different subunits. Subunits NuoA, H, J, K, L, M, N constitute the membrane sector of the complex.

It is found in the cell inner membrane. The catalysed reaction is a quinone + NADH + 5 H(+)(in) = a quinol + NAD(+) + 4 H(+)(out). Its function is as follows. NDH-1 shuttles electrons from NADH, via FMN and iron-sulfur (Fe-S) centers, to quinones in the respiratory chain. The immediate electron acceptor for the enzyme in this species is believed to be ubiquinone. Couples the redox reaction to proton translocation (for every two electrons transferred, four hydrogen ions are translocated across the cytoplasmic membrane), and thus conserves the redox energy in a proton gradient. The chain is NADH-quinone oxidoreductase subunit A from Acinetobacter baylyi (strain ATCC 33305 / BD413 / ADP1).